A 255-amino-acid chain; its full sequence is Acetylglutamate kinase (255 aa).

Residues 40–41 (GG), Arg-62, and Asn-153 each bind substrate.

This sequence belongs to the acetylglutamate kinase family. ArgB subfamily.

It is found in the cytoplasm. The catalysed reaction is N-acetyl-L-glutamate + ATP = N-acetyl-L-glutamyl 5-phosphate + ADP. The protein operates within amino-acid biosynthesis; L-arginine biosynthesis; N(2)-acetyl-L-ornithine from L-glutamate: step 2/4. Catalyzes the ATP-dependent phosphorylation of N-acetyl-L-glutamate. The sequence is that of Acetylglutamate kinase from Bacillus cereus (strain AH187).